A 423-amino-acid chain; its full sequence is Glucose-1-phosphate adenylyltransferase (423 aa).

Alpha-D-glucose 1-phosphate contacts are provided by residues Tyr100, Gly165, 180–181 (EK), and Ser191.

The protein belongs to the bacterial/plant glucose-1-phosphate adenylyltransferase family. Homotetramer.

The catalysed reaction is alpha-D-glucose 1-phosphate + ATP + H(+) = ADP-alpha-D-glucose + diphosphate. It participates in glycan biosynthesis; glycogen biosynthesis. Functionally, involved in the biosynthesis of ADP-glucose, a building block required for the elongation reactions to produce glycogen. Catalyzes the reaction between ATP and alpha-D-glucose 1-phosphate (G1P) to produce pyrophosphate and ADP-Glc. In Lachnospira eligens (strain ATCC 27750 / DSM 3376 / VPI C15-48 / C15-B4) (Eubacterium eligens), this protein is Glucose-1-phosphate adenylyltransferase.